A 172-amino-acid polypeptide reads, in one-letter code: Protein-export protein SecB (172 aa).

The segment at 152 to 172 (AQGAEGGNSGIVMPDGSQARH) is disordered.

It belongs to the SecB family. Homotetramer, a dimer of dimers. One homotetramer interacts with 1 SecA dimer.

The protein resides in the cytoplasm. In terms of biological role, one of the proteins required for the normal export of preproteins out of the cell cytoplasm. It is a molecular chaperone that binds to a subset of precursor proteins, maintaining them in a translocation-competent state. It also specifically binds to its receptor SecA. This Cupriavidus taiwanensis (strain DSM 17343 / BCRC 17206 / CCUG 44338 / CIP 107171 / LMG 19424 / R1) (Ralstonia taiwanensis (strain LMG 19424)) protein is Protein-export protein SecB.